A 274-amino-acid chain; its full sequence is Rhamnulose-1-phosphate aldolase (274 aa).

E117 is a catalytic residue. Zn(2+) contacts are provided by H141, H143, and H212.

This sequence belongs to the aldolase class II family. RhaD subfamily. In terms of assembly, homotetramer. Zn(2+) is required as a cofactor.

Its subcellular location is the cytoplasm. The enzyme catalyses L-rhamnulose 1-phosphate = (S)-lactaldehyde + dihydroxyacetone phosphate. The protein operates within carbohydrate degradation; L-rhamnose degradation; glycerone phosphate from L-rhamnose: step 3/3. Its function is as follows. Catalyzes the reversible cleavage of L-rhamnulose-1-phosphate to dihydroxyacetone phosphate (DHAP) and L-lactaldehyde. The protein is Rhamnulose-1-phosphate aldolase of Yersinia pseudotuberculosis serotype I (strain IP32953).